We begin with the raw amino-acid sequence, 1429 residues long: Alpha-agarase (1429 aa).

A signal peptide spans 1–26; sequence MFKTKRSLLNSSIAISFAVLGVQAQA. CBM6 domains follow at residues 29–161 and 211–345; these read LELQ…FRLT and FVIQ…LTFT. Disordered regions lie at residues 349 to 400 and 474 to 495; these read SDGG…DGVS and NTPAGTQVDASGCETDNGGEPG. A compositionally biased stretch (polar residues) spans 369–378; it reads SSDSCPNTPT. Residues 490–638 enclose the PA14 domain; that stretch reads NGGEPGDSYY…GGTNFVHPSN (149 aa). The CBM6 3 domain occupies 662 to 793; it reads IYIQLEDFDE…QWSGDLVRLA (132 aa).

Belongs to the glycosyl hydrolase 96 family. Homodimer. Ca(2+) serves as cofactor.

It catalyses the reaction Endohydrolysis of 1,3-alpha-L-galactosidic linkages in agarose, yielding agarotetraose as the major product.. Its function is as follows. Alpha-agarase. Does not hydrolyze agarotetraose, agarohexaose, kappa-carrageenan, iota-carrageenan or lambda-carrageenan. The protein is Alpha-agarase of Alteromonas agarilytica.